The primary structure comprises 308 residues: General transcription factor IIH subunit 3 (308 aa).

The C4-type zinc-finger motif lies at 268–285; the sequence is CSVCLSIFCNFSPICTTC.

This sequence belongs to the TFB4 family. In terms of assembly, part of a TFIID-containing RNA polymerase II pre-initiation complex that is composed of TBP and at least GTF2A1, GTF2A2, GTF2E1, GTF2E2, GTF2F1, GTF2H2, GTF2H3, GTF2H4, GTF2H5, GTF2B, TCEA1, ERCC2, ERCC3, TAF1, TAF2, TAF3, TAF4, TAF5, TAF6, TAF7, TAF8, TAF9, TAF10, TAF11, TAF12 and TAF13. Component of the 7-subunit TFIIH core complex composed of XPB/ERCC3, XPD/ERCC2, GTF2H1, GTF2H2, GTF2H3, GTF2H4 and GTF2H5, which is active in NER. The core complex associates with the 3-subunit CDK-activating kinase (CAK) module composed of CCNH/cyclin H, CDK7 and MNAT1 to form the 10-subunit holoenzyme (holo-TFIIH) active in transcription. Interacts with RARA; the interaction requires prior phosphorylation of RARA on 'Ser-369' which then enhances interaction of RARA with CDK7.

The protein resides in the nucleus. Component of the general transcription and DNA repair factor IIH (TFIIH) core complex, which is involved in general and transcription-coupled nucleotide excision repair (NER) of damaged DNA and, when complexed to CAK, in RNA transcription by RNA polymerase II. In NER, TFIIH acts by opening DNA around the lesion to allow the excision of the damaged oligonucleotide and its replacement by a new DNA fragment. In transcription, TFIIH has an essential role in transcription initiation. When the pre-initiation complex (PIC) has been established, TFIIH is required for promoter opening and promoter escape. Phosphorylation of the C-terminal tail (CTD) of the largest subunit of RNA polymerase II by the kinase module CAK controls the initiation of transcription. This Homo sapiens (Human) protein is General transcription factor IIH subunit 3 (GTF2H3).